The chain runs to 503 residues: Variant surface glycoprotein AnTaT 1.1 (503 aa).

A signal peptide spans 1 to 29 (MVTKERNAALKIVMLVASALTLHPQQALA). Cystine bridges form between C45–C172 and C154–C209. N113 is a glycosylation site (N-linked (GlcNAc...) asparagine). Residues N419 and N432 are each glycosylated (N-linked (GlcNAc...) asparagine). D480 carries GPI-anchor amidated aspartate lipidation. A propeptide spans 481-503 (SSILLTKNFALSVVSAALVALLF) (removed in mature form).

It localises to the cell membrane. In terms of biological role, VSG forms a coat on the surface of the parasite. The trypanosome evades the immune response of the host by expressing a series of antigenically distinct VSGs from an estimated 1000 VSG genes. The sequence is that of Variant surface glycoprotein AnTaT 1.1 from Trypanosoma brucei brucei.